The primary structure comprises 182 residues: uncharacterized protein (182 aa).

This is an uncharacterized protein from Acanthamoeba polyphaga mimivirus (APMV).